A 708-amino-acid chain; its full sequence is Ribosomal RNA large subunit methyltransferase K/L (708 aa).

A THUMP domain is found at 43 to 154 (QIYRCCLWSR…KENALLGIDM (112 aa)).

Belongs to the methyltransferase superfamily. RlmKL family.

It localises to the cytoplasm. The catalysed reaction is guanosine(2445) in 23S rRNA + S-adenosyl-L-methionine = N(2)-methylguanosine(2445) in 23S rRNA + S-adenosyl-L-homocysteine + H(+). It catalyses the reaction guanosine(2069) in 23S rRNA + S-adenosyl-L-methionine = N(2)-methylguanosine(2069) in 23S rRNA + S-adenosyl-L-homocysteine + H(+). Functionally, specifically methylates the guanine in position 2445 (m2G2445) and the guanine in position 2069 (m7G2069) of 23S rRNA. This Vibrio cholerae serotype O1 (strain ATCC 39541 / Classical Ogawa 395 / O395) protein is Ribosomal RNA large subunit methyltransferase K/L.